A 341-amino-acid polypeptide reads, in one-letter code: S-adenosylmethionine:tRNA ribosyltransferase-isomerase (341 aa).

It belongs to the QueA family. As to quaternary structure, monomer.

It localises to the cytoplasm. The catalysed reaction is 7-aminomethyl-7-carbaguanosine(34) in tRNA + S-adenosyl-L-methionine = epoxyqueuosine(34) in tRNA + adenine + L-methionine + 2 H(+). It participates in tRNA modification; tRNA-queuosine biosynthesis. Functionally, transfers and isomerizes the ribose moiety from AdoMet to the 7-aminomethyl group of 7-deazaguanine (preQ1-tRNA) to give epoxyqueuosine (oQ-tRNA). The sequence is that of S-adenosylmethionine:tRNA ribosyltransferase-isomerase from Caldanaerobacter subterraneus subsp. tengcongensis (strain DSM 15242 / JCM 11007 / NBRC 100824 / MB4) (Thermoanaerobacter tengcongensis).